The following is a 338-amino-acid chain: Tagatose 1,6-diphosphate aldolase (338 aa).

This sequence belongs to the aldolase LacD family.

It carries out the reaction D-tagatofuranose 1,6-bisphosphate = D-glyceraldehyde 3-phosphate + dihydroxyacetone phosphate. It participates in carbohydrate metabolism; D-tagatose 6-phosphate degradation; D-glyceraldehyde 3-phosphate and glycerone phosphate from D-tagatose 6-phosphate: step 2/2. The sequence is that of Tagatose 1,6-diphosphate aldolase from Listeria monocytogenes serotype 4a (strain HCC23).